A 291-amino-acid polypeptide reads, in one-letter code: Nucleotide-binding protein LJ_0866 (291 aa).

ATP is bound at residue 13 to 20 (GMSGAGKT). Residue 63–66 (DLRV) participates in GTP binding.

It belongs to the RapZ-like family.

Displays ATPase and GTPase activities. In Lactobacillus johnsonii (strain CNCM I-12250 / La1 / NCC 533), this protein is Nucleotide-binding protein LJ_0866.